Consider the following 417-residue polypeptide: MSSKYPRSVRCCLPLWALTLEAALILLFFFFTYYDASLEDQKGLVASYQVCQDLTVMAVLGLGFFTSNLRRNSWSSVAFNLFLLALGVQWAILLDGFLSQFSPGKVVIKLFSIRLATRSTTSMLISMNAVLGKVNLAQLVVMELVELTVFGTMRIVIYNIFKIDYGMNMMHIHVFAAYFGLTVAWCLPKPLPKGTEDKYQTTTSPSLFAMLGTLFLWMFWPTFNSALLLNPIERKNAVFSTYYALAVSAVTAISVSSLAHPQRKINMTYMPNAGLAGGVAVGASCHVIHSPWIAMVLGLVAGLISFGGAKCLPVCFNRVLGIHESHSMHYTFGLPALLGEITYIVLMALRVFWASSNMIGFQVLLSTGTLSLAMAMSITSGLLTGLLLNLKIWKGPHVAKYFDDQAFWEFPHLAVGF.

11 helical membrane passes run 12–32 (CLPL…FFFT), 44–64 (LVAS…GLGF), 77–97 (VAFN…LDGF), 125–145 (ISMN…MELV), 172–192 (IHVF…KPLP), 203–223 (TSPS…WPTF), 238–258 (VFST…VSSL), 265–285 (INMT…GASC), 287–307 (VIHS…ISFG), 331–351 (TFGL…ALRV), and 358–378 (MIGF…AMSI).

Belongs to the ammonium transporter (TC 2.A.49) family. Rh subfamily.

Its subcellular location is the membrane. Its function is as follows. May be part of an oligomeric complex which is likely to have a transport or channel function in the erythrocyte membrane. The sequence is that of RH-like protein from Macaca fascicularis (Crab-eating macaque).